A 277-amino-acid chain; its full sequence is 4-hydroxy-tetrahydrodipicolinate reductase (277 aa).

Residues 10 to 15 and Glu-36 each bind NAD(+); that span reads GAGGRM. Position 37 (Arg-37) interacts with NADP(+). NAD(+) contacts are provided by residues 100–102 and 124–127; these read GTT and SGNM. His-158 (proton donor/acceptor) is an active-site residue. His-159 provides a ligand contact to (S)-2,3,4,5-tetrahydrodipicolinate. The active-site Proton donor is the Lys-162. 168–169 is a binding site for (S)-2,3,4,5-tetrahydrodipicolinate; sequence GT.

Belongs to the DapB family.

Its subcellular location is the cytoplasm. It catalyses the reaction (S)-2,3,4,5-tetrahydrodipicolinate + NAD(+) + H2O = (2S,4S)-4-hydroxy-2,3,4,5-tetrahydrodipicolinate + NADH + H(+). The enzyme catalyses (S)-2,3,4,5-tetrahydrodipicolinate + NADP(+) + H2O = (2S,4S)-4-hydroxy-2,3,4,5-tetrahydrodipicolinate + NADPH + H(+). It participates in amino-acid biosynthesis; L-lysine biosynthesis via DAP pathway; (S)-tetrahydrodipicolinate from L-aspartate: step 4/4. Its function is as follows. Catalyzes the conversion of 4-hydroxy-tetrahydrodipicolinate (HTPA) to tetrahydrodipicolinate. The polypeptide is 4-hydroxy-tetrahydrodipicolinate reductase (Chelativorans sp. (strain BNC1)).